A 263-amino-acid polypeptide reads, in one-letter code: Methylesterase 3 (263 aa).

Residue S85 is the Acyl-ester intermediate of the active site. Residues D213 and H241 each act as charge relay system in the active site.

The protein belongs to the AB hydrolase superfamily. Methylesterase family.

The catalysed reaction is methyl (indol-3-yl)acetate + H2O = (indol-3-yl)acetate + methanol + H(+). It carries out the reaction methyl (-)-jasmonate + H2O = jasmonate + methanol + H(+). Its pathway is plant hormone biosynthesis. The protein operates within lipid metabolism; oxylipin biosynthesis. Its function is as follows. Methylesterase shown to have carboxylesterase activity, methyl indole-3-acetic acid (MeIAA) esterase activity and methyl jasmonate (MeJA) esterase activity in vitro. In Arabidopsis thaliana (Mouse-ear cress), this protein is Methylesterase 3.